A 244-amino-acid chain; its full sequence is Agamous-like MADS-box protein MADS2 (244 aa).

One can recognise an MADS-box domain in the interval 1–61; it reads MGRGRVELKR…GKLYEFCSSS (61 aa). One can recognise a K-box domain in the interval 88-178; it reads EQSSYREYLK…TRKLDEISVK (91 aa).

As to expression, expressed in flowers and seeds.

The protein localises to the nucleus. Probable transcription factor involved in flower development. This is Agamous-like MADS-box protein MADS2 from Vitis vinifera (Grape).